Reading from the N-terminus, the 331-residue chain is DNA-directed RNA polymerase subunit alpha (331 aa).

The segment at 1-246 (MMQTSRTLHN…GLFSPLQEVS (246 aa)) is alpha N-terminal domain (alpha-NTD). An alpha C-terminal domain (alpha-CTD) region spans residues 256 to 331 (AEDNQKNQIP…LTLPRERSKT (76 aa)).

The protein belongs to the RNA polymerase alpha chain family. In terms of assembly, in cyanobacteria the RNAP catalytic core is composed of 2 alpha, 1 beta, 1 beta', 1 gamma and 1 omega subunit. When a sigma factor is associated with the core the holoenzyme is formed, which can initiate transcription.

The enzyme catalyses RNA(n) + a ribonucleoside 5'-triphosphate = RNA(n+1) + diphosphate. DNA-dependent RNA polymerase catalyzes the transcription of DNA into RNA using the four ribonucleoside triphosphates as substrates. The sequence is that of DNA-directed RNA polymerase subunit alpha from Synechococcus sp. (strain JA-3-3Ab) (Cyanobacteria bacterium Yellowstone A-Prime).